Reading from the N-terminus, the 378-residue chain is Protein RecA (378 aa).

79–86 (GPESSGKT) is a binding site for ATP.

This sequence belongs to the RecA family.

It localises to the cytoplasm. Can catalyze the hydrolysis of ATP in the presence of single-stranded DNA, the ATP-dependent uptake of single-stranded DNA by duplex DNA, and the ATP-dependent hybridization of homologous single-stranded DNAs. It interacts with LexA causing its activation and leading to its autocatalytic cleavage. This is Protein RecA from Streptococcus equi subsp. zooepidemicus (strain H70).